Reading from the N-terminus, the 248-residue chain is Probable transcriptional regulatory protein LAR_0538 (248 aa).

A disordered region spans residues 1-22 (MSGHSKWHNIQGRKNAQDAKRG).

The protein belongs to the TACO1 family.

It localises to the cytoplasm. This Limosilactobacillus reuteri subsp. reuteri (strain JCM 1112) (Lactobacillus reuteri) protein is Probable transcriptional regulatory protein LAR_0538.